A 143-amino-acid polypeptide reads, in one-letter code: Papain inhibitor (143 aa).

Positions 1–33 are cleaved as a signal peptide; it reads MREFRRVRRVRFAACALVAAATGITLAAGPASA.

In terms of assembly, monomer.

It localises to the secreted. Stress protein produced under hyperthermal stress conditions. Serves as a glutamine and lysine donor substrate for transglutaminase. Inhibits the cysteine proteases papain and bromelain as well as the bovine serine protease trypsin. Has hardly any or no effect on subtilisin, bovine chymotrypsin, proteinase K from T.album, transglutaminase-activating metalloproteinase (TAMEP) from S.mobaraensis, dispase from B.polymyxa, thermolysin from B.thermoproteolyticus or collagenase from C.histolyticum. This is Papain inhibitor (pi) from Streptomyces mobaraensis (Streptoverticillium mobaraense).